The sequence spans 174 residues: MSVKGWSASRPSEKILLTWKRFKRSATSGIKPTSQAKKAEPQVCKRKKSLRISMNHTRQQRDQTVSAMYSKKIREVERTILHLWRQKTVLKRIPKQDLQYDVIMFMITAVKRLRESKMLTVSWYQQALQVIGDSKEEREALMIALKILAKIIPKEMLHLTGDILLALTQTEQLM.

Belongs to the morbillivirus protein C family.

This is Protein C (P/V/C) from Phocine distemper virus (PDV).